Consider the following 388-residue polypeptide: MSKKEIVAMILAGGQGSRLGVLTKNLAKPAVPFGGKYRIIDFPLSNCSNSGIYTVGVLTQYKPLKLNEHIGIGDTWDLDRRDGGVSILPPYQKEKGGDWYKGTANAIYQNIEFIERYDPEYVLILSGDHIYKMDYDKMLEMHKQKEADATIAVINVPMHEASRFGIMNTNEDLSIYEFEEKPEHPKSTNASMGIYIFNWKILKKFLEEDELDPSSSNDFGKNIIPKMLNSGKKLIAYPFNGYWKDVGTIESLWEANMDLLKYEDELSLYDSEWKIYSANPVRPAQFIGKDAEIKSSLTVEGCIVHGKVENSVLFQGVYVGKGAIVKDAVIMPNTKIEDNVLIEKAIIGSEAIVCKGCKIGDGNKISVIASKEVVIGSKEIIEECAMVK.

Alpha-D-glucose 1-phosphate contacts are provided by residues tyrosine 100, glycine 165, 180 to 181, and serine 191; that span reads EK.

It belongs to the bacterial/plant glucose-1-phosphate adenylyltransferase family. In terms of assembly, homotetramer.

It carries out the reaction alpha-D-glucose 1-phosphate + ATP + H(+) = ADP-alpha-D-glucose + diphosphate. The protein operates within glycan biosynthesis; glycogen biosynthesis. Functionally, involved in the biosynthesis of ADP-glucose, a building block required for the elongation reactions to produce glycogen. Catalyzes the reaction between ATP and alpha-D-glucose 1-phosphate (G1P) to produce pyrophosphate and ADP-Glc. The protein is Glucose-1-phosphate adenylyltransferase of Clostridium perfringens (strain SM101 / Type A).